The primary structure comprises 141 residues: Large ribosomal subunit protein uL14 (141 aa).

This sequence belongs to the universal ribosomal protein uL14 family. Part of the 50S ribosomal subunit. Forms a cluster with proteins L3 and L24e, part of which may contact the 16S rRNA in 2 intersubunit bridges.

Binds to 23S rRNA. Forms part of two intersubunit bridges in the 70S ribosome. The chain is Large ribosomal subunit protein uL14 from Thermofilum pendens (strain DSM 2475 / Hrk 5).